A 485-amino-acid chain; its full sequence is Ribulose bisphosphate carboxylase large chain (485 aa).

Residues 1 to 2 (MS) constitute a propeptide that is removed on maturation. N-acetylproline is present on P3. At K14 the chain carries N6,N6,N6-trimethyllysine. Substrate contacts are provided by N123 and T173. The active-site Proton acceptor is K175. K177 contacts substrate. Mg(2+) is bound by residues K201, D203, and E204. K201 is subject to N6-carboxylysine. H294 serves as the catalytic Proton acceptor. Residues R295, H327, and S379 each contribute to the substrate site.

Belongs to the RuBisCO large chain family. Type I subfamily. As to quaternary structure, heterohexadecamer of 8 large chains and 8 small chains; disulfide-linked. The disulfide link is formed within the large subunit homodimers. Mg(2+) is required as a cofactor. The disulfide bond which can form in the large chain dimeric partners within the hexadecamer appears to be associated with oxidative stress and protein turnover.

It localises to the plastid. The protein localises to the chloroplast. The catalysed reaction is 2 (2R)-3-phosphoglycerate + 2 H(+) = D-ribulose 1,5-bisphosphate + CO2 + H2O. The enzyme catalyses D-ribulose 1,5-bisphosphate + O2 = 2-phosphoglycolate + (2R)-3-phosphoglycerate + 2 H(+). Functionally, ruBisCO catalyzes two reactions: the carboxylation of D-ribulose 1,5-bisphosphate, the primary event in carbon dioxide fixation, as well as the oxidative fragmentation of the pentose substrate in the photorespiration process. Both reactions occur simultaneously and in competition at the same active site. This chain is Ribulose bisphosphate carboxylase large chain, found in Helianthus annuus (Common sunflower).